Here is a 209-residue protein sequence, read N- to C-terminus: Kynurenine formamidase (209 aa).

Phe-18 lines the substrate pocket. Zn(2+) is bound by residues His-48, His-52, and Asp-54. His-58 serves as the catalytic Proton donor/acceptor. Residues His-160 and Glu-172 each contribute to the Zn(2+) site.

Belongs to the Cyclase 1 superfamily. KynB family. In terms of assembly, homodimer. Requires Zn(2+) as cofactor.

It carries out the reaction N-formyl-L-kynurenine + H2O = L-kynurenine + formate + H(+). The protein operates within amino-acid degradation; L-tryptophan degradation via kynurenine pathway; L-kynurenine from L-tryptophan: step 2/2. Catalyzes the hydrolysis of N-formyl-L-kynurenine to L-kynurenine, the second step in the kynurenine pathway of tryptophan degradation. This is Kynurenine formamidase from Bordetella avium (strain 197N).